The sequence spans 185 residues: MIQTIDLKKGMVFERDGKLLKVLQINHHKPGKGNTLMQMDIQDLRSGSIVHTTMRPSEKVEQVNVDKRSAQYLYDEGDSAVFMDLESYEQYSLNHDLLGDDKNYLVENMKVILNFVNGDIIGVELPTTVELTVAETEPMIKGATIDGGGKPATMETGLVVNVPAFIKNGDKLIINTTDGSYKSRA.

Belongs to the elongation factor P family.

The protein localises to the cytoplasm. It participates in protein biosynthesis; polypeptide chain elongation. In terms of biological role, involved in peptide bond synthesis. Stimulates efficient translation and peptide-bond synthesis on native or reconstituted 70S ribosomes in vitro. Probably functions indirectly by altering the affinity of the ribosome for aminoacyl-tRNA, thus increasing their reactivity as acceptors for peptidyl transferase. This chain is Elongation factor P, found in Limosilactobacillus reuteri (strain DSM 20016) (Lactobacillus reuteri).